The chain runs to 248 residues: MNVLIVDDEPLARERLARLVGQLDGYRVLEPSASNGEEALTLIDSLKPDIVLLDIRMPGLDGLQVAARLCEREAPPAVIFCTAHDEFALEAFQVSAVGYLVKPVRSEDLAEALKKASRPNRVQLAALTKPPASGGSGPRSHISARTRKGIELIPLEEVIFFIADHKYVTLRHAQGEVLLDEPLKALEDEFGERFVRIHRNALVARERIERLQRTPLGHFQLYLKGLDGDALTVSRRHVAGVRRLMHQL.

The Response regulatory domain maps to 2-117 (NVLIVDDEPL…DLAEALKKAS (116 aa)). A 4-aspartylphosphate modification is found at Asp54. Residues 142 to 247 (ISARTRKGIE…VAGVRRLMHQ (106 aa)) form the HTH LytTR-type domain.

Its pathway is glycan biosynthesis; alginate biosynthesis [regulation]. Its function is as follows. Positive regulator of the algD gene, which codes for a GDP-mannose dehydrogenase, a key step enzyme in the alginate biosynthesis pathway. The protein is Positive alginate biosynthesis regulatory protein (algR) of Pseudomonas aeruginosa (strain ATCC 15692 / DSM 22644 / CIP 104116 / JCM 14847 / LMG 12228 / 1C / PRS 101 / PAO1).